We begin with the raw amino-acid sequence, 529 residues long: MKPHLKQWRQRMLFGLFAGGLLFLLIFIYFTDSNPAEPVPSSLSFLETRRLLPVQGKQRAIMGAAHEPSPPGGLDARQALPRAHPAGSFHAGPGDLQKWAQSQDGFEHKEFFSSQVGRKSQSAFYPEDDDYFFAAGQPGWHSHSQGTLGFPSPGEPGPREGAFPAAQVQRRRVKKRHRRQRRSHVLEEGDDGDRLYSSMSRAFLYRLWKGNVSSKMLNPRLQKAMKDYLTANKHGVRFRGKREAGLSRAQLLCQLRSRARVRTLDGTEAPFSALGWRRLVPAVPLSQLHPRGLRSCAVVMSAGAILNSSLGEEIDSHDAVLRFNSAPTRGYEKDVGNKTTVRIINSQILTNPSHHFVDSSLYKDVILVAWDPAPYSANLNLWYKKPDYNLFTPYIQHRQRNPNQPFYILHPKFIWQLWDIIQENTKEKIQPNPPSSGFIGILIMMSMCREVHVYEYIPSVRQTELCHYHELYYDAACTLGAYHPLLYEKLLVQRLNTGTQGDLHRKGKVVLPGFQAVHCPAPSPVIPHS.

At 1–11 the chain is on the cytoplasmic side; the sequence is MKPHLKQWRQR. Residues 12–32 traverse the membrane as a helical; Signal-anchor for type II membrane protein segment; the sequence is MLFGLFAGGLLFLLIFIYFTD. The Lumenal portion of the chain corresponds to 33–529; it reads SNPAEPVPSS…PAPSPVIPHS (497 aa). Residues 142 to 186 form a disordered region; that stretch reads SHSQGTLGFPSPGEPGPREGAFPAAQVQRRRVKKRHRRQRRSHVL. Basic residues predominate over residues 169–183; it reads QRRRVKKRHRRQRRS. An N-linked (GlcNAc...) asparagine glycan is attached at N211. 3 disulfides stabilise this stretch: C253–C519, C296–C448, and C466–C477.

It belongs to the glycosyltransferase 29 family.

It localises to the golgi apparatus. The protein localises to the golgi stack membrane. The catalysed reaction is a beta-D-galactoside + CMP-N-acetyl-beta-neuraminate = an N-acetyl-alpha-neuraminyl-(2-&gt;6)-beta-D-galactosyl derivative + CMP + H(+). Functionally, transfers sialic acid from the donor of substrate CMP-sialic acid to galactose containing acceptor substrates. Has alpha-2,6-sialyltransferase activity toward oligosaccharides that have the Gal-beta-1,4-GlcNAc sequence at the non-reducing end of their carbohydrate groups, but it has weak or no activities toward glycoproteins and glycolipids. In Pan troglodytes (Chimpanzee), this protein is Beta-galactoside alpha-2,6-sialyltransferase 2 (ST6GAL2).